The chain runs to 129 residues: Methylmalonyl-CoA decarboxylase subunit gamma (129 aa).

Low complexity-rich tracts occupy residues 24-39 and 49-58; these read APAA…APAP and PAAAAAPVPA. Residues 24 to 58 are disordered; that stretch reads APAAAPKAAPAAAPAPKAAPAPAPAPAAAAAPVPA. The 79-residue stretch at 51–129 folds into the Biotinyl-binding domain; it reads AAAAPVPAGA…STGDDMVVLG (79 aa). An N6-biotinyllysine modification is found at Lys95.

In terms of assembly, the methylmalonyl-CoA decarboxylase is composed of five subunits: the carboxyltransferase alpha subunit (MmdA), the tunnel beta subunit (MmdB), the biotin-containing gamma subunit (MmdC), and the delta (MmdD) and epsilon (MmdE) subunits. It depends on biotin as a cofactor.

The protein resides in the cell membrane. The enzyme catalyses (S)-methylmalonyl-CoA + Na(+)(in) + H(+)(out) = propanoyl-CoA + Na(+)(out) + CO2. With respect to regulation, completely inhibited by avidin. In terms of biological role, biotin-containing subunit of the sodium ion pump methylmalonyl-CoA decarboxylase, which converts the chemical energy of a decarboxylation reaction into an electrochemical gradient of Na(+) ions across the cytoplasmic membrane, thereby creating a sodium ion motive force that is used for ATP synthesis. Can also convert malonyl-CoA into acetyl-CoA. This chain is Methylmalonyl-CoA decarboxylase subunit gamma, found in Veillonella parvula (Staphylococcus parvulus).